A 506-amino-acid polypeptide reads, in one-letter code: Maturase K (506 aa).

Belongs to the intron maturase 2 family. MatK subfamily.

It is found in the plastid. Its subcellular location is the chloroplast. In terms of biological role, usually encoded in the trnK tRNA gene intron. Probably assists in splicing its own and other chloroplast group II introns. This is Maturase K from Trifolium subterraneum (Subterranean clover).